The chain runs to 933 residues: Isoleucine--tRNA ligase (933 aa).

Residues 57 to 67 (PYANGNIHVGH) carry the 'HIGH' region motif. Glu-554 lines the L-isoleucyl-5'-AMP pocket. The 'KMSKS' region signature appears at 595–599 (KMSKS). An ATP-binding site is contributed by Lys-598.

It belongs to the class-I aminoacyl-tRNA synthetase family. IleS type 1 subfamily. In terms of assembly, monomer.

The protein resides in the cytoplasm. The catalysed reaction is tRNA(Ile) + L-isoleucine + ATP = L-isoleucyl-tRNA(Ile) + AMP + diphosphate. Functionally, catalyzes the attachment of isoleucine to tRNA(Ile). As IleRS can inadvertently accommodate and process structurally similar amino acids such as valine, to avoid such errors it has two additional distinct tRNA(Ile)-dependent editing activities. One activity is designated as 'pretransfer' editing and involves the hydrolysis of activated Val-AMP. The other activity is designated 'posttransfer' editing and involves deacylation of mischarged Val-tRNA(Ile). The chain is Isoleucine--tRNA ligase from Streptococcus pyogenes serotype M18 (strain MGAS8232).